The chain runs to 645 residues: Rab11 family-interacting protein 5 (645 aa).

One can recognise a C2 domain in the interval 1–146; that stretch reads MALVRDPEPA…AGRAQHTQWY (146 aa). Residues S176, S283, S286, S307, S357, and S367 each carry the phosphoserine modification. The disordered stretch occupies residues 271–299; the sequence is GAELLTRSPSHSSWLSTEGGRDSIQSPKL. Residues 277–286 show a composition bias toward polar residues; sequence RSPSHSSWLS. The interval 341 to 550 is disordered; sequence SHVYNEEPQP…STALSSGLER (210 aa). The segment covering 357 to 374 has biased composition (low complexity); sequence SISGPFPPSSSLHSVPPR. Residues 375-387 show a composition bias toward basic and acidic residues; it reads SSEEGSRSSDDSW. A phosphoserine mark is found at S391 and S395. Residues 452 to 463 show a composition bias toward basic residues; sequence RMGLFHHHHHQG. Residues S486, S530, S539, S545, and S640 each carry the phosphoserine modification. An FIP-RBD domain is found at 578-640; it reads KDSAVLDQSA…ETSPTLLQIS (63 aa).

As to quaternary structure, interacts with RAB11FIP4. Interacts with NAPG. Interacts with RO60. Interacts with RAB11A that has been activated by GTP binding. Post-translationally, phosphorylated on serine and threonine residues. Phosphorylation at Ser-357 is PKA-dependent.

Its subcellular location is the cytoplasm. The protein localises to the recycling endosome membrane. The protein resides in the early endosome membrane. It localises to the golgi apparatus membrane. It is found in the cytoplasmic vesicle. Its subcellular location is the secretory vesicle membrane. The protein localises to the mitochondrion membrane. Its function is as follows. Rab effector involved in protein trafficking from apical recycling endosomes to the apical plasma membrane. Involved in insulin granule exocytosis. May regulate V-ATPase intracellular transport in response to extracellular acidosis. The polypeptide is Rab11 family-interacting protein 5 (Mus musculus (Mouse)).